The following is a 124-amino-acid chain: Small ribosomal subunit protein uS12 (124 aa).

The tract at residues 1 to 22 is disordered; it reads MATINQLVRKPRKRKVAKSDVP. 3-methylthioaspartic acid is present on aspartate 89. The tract at residues 101 to 124 is disordered; sequence TLDTQGVQNRKQGRSKYGAKRPKS. The span at 111-124 shows a compositional bias: basic residues; sequence KQGRSKYGAKRPKS.

The protein belongs to the universal ribosomal protein uS12 family. As to quaternary structure, part of the 30S ribosomal subunit. Contacts proteins S8 and S17. May interact with IF1 in the 30S initiation complex.

With S4 and S5 plays an important role in translational accuracy. Its function is as follows. Interacts with and stabilizes bases of the 16S rRNA that are involved in tRNA selection in the A site and with the mRNA backbone. Located at the interface of the 30S and 50S subunits, it traverses the body of the 30S subunit contacting proteins on the other side and probably holding the rRNA structure together. The combined cluster of proteins S8, S12 and S17 appears to hold together the shoulder and platform of the 30S subunit. This chain is Small ribosomal subunit protein uS12, found in Marinobacter nauticus (strain ATCC 700491 / DSM 11845 / VT8) (Marinobacter aquaeolei).